The following is a 95-amino-acid chain: U6 snRNA-associated Sm-like protein LSm2 (95 aa).

One can recognise a Sm domain in the interval 2–76 (LFYSFFKSLV…VRYVQLPADE (75 aa)). At T79 the chain carries Phosphothreonine.

Belongs to the snRNP Sm proteins family. Component of the precatalytic spliceosome (spliceosome B complex). Component of the U4/U6-U5 tri-snRNP complex, a building block of the precatalytic spliceosome (spliceosome B complex). The U4/U6-U5 tri-snRNP complex is composed of the U4, U6 and U5 snRNAs and at least PRPF3, PRPF4, PRPF6, PRPF8, PRPF31, SNRNP200, TXNL4A, SNRNP40, SNRPB, SNRPD1, SNRPD2, SNRPD3, SNRPE, SNRPF, SNRPG, DDX23, CD2BP2, PPIH, SNU13, EFTUD2, SART1 and USP39, plus LSM2, LSM3, LSM4, LSM5, LSM6, LSM7 and LSM8. LSM2, LSM3, LSM4, LSM5, LSM6, LSM7 and LSM8 form a heptameric, ring-shaped subcomplex (the LSM2-8 complex) that is part of the U4/U6-U5 tri-snRNP complex and the precatalytic spliceosome.

The protein resides in the nucleus. Its function is as follows. Plays a role in pre-mRNA splicing as component of the U4/U6-U5 tri-snRNP complex that is involved in spliceosome assembly, and as component of the precatalytic spliceosome (spliceosome B complex). The heptameric LSM2-8 complex binds specifically to the 3'-terminal U-tract of U6 snRNA. The sequence is that of U6 snRNA-associated Sm-like protein LSm2 (LSM2) from Homo sapiens (Human).